We begin with the raw amino-acid sequence, 200 residues long: ATP synthase subunit delta', mitochondrial (200 aa).

The N-terminal 21 residues, 1–21 (MFRHSSRLLARATTMGWRRPF), are a transit peptide targeting the mitochondrion.

It belongs to the ATPase epsilon chain family. As to quaternary structure, F-type ATPases have 2 components, CF(1) - the catalytic core - and CF(0) - the membrane proton channel. CF(1) has five subunits: alpha(3), beta(3), gamma(1), delta(1), epsilon(1). CF(0) has three main subunits: a, b and c.

Its subcellular location is the mitochondrion. It is found in the mitochondrion inner membrane. Functionally, mitochondrial membrane ATP synthase (F(1)F(0) ATP synthase or Complex V) produces ATP from ADP in the presence of a proton gradient across the membrane which is generated by electron transport complexes of the respiratory chain. F-type ATPases consist of two structural domains, F(1) - containing the extramembraneous catalytic core, and F(0) - containing the membrane proton channel, linked together by a central stalk and a peripheral stalk. During catalysis, ATP turnover in the catalytic domain of F(1) is coupled via a rotary mechanism of the central stalk subunits to proton translocation. Part of the complex F(1) domain and of the central stalk which is part of the complex rotary element. Rotation of the central stalk against the surrounding alpha(3)beta(3) subunits leads to hydrolysis of ATP in three separate catalytic sites on the beta subunits. The chain is ATP synthase subunit delta', mitochondrial from Ipomoea batatas (Sweet potato).